The following is a 98-amino-acid chain: Large ribosomal subunit protein uL23 (98 aa).

Belongs to the universal ribosomal protein uL23 family. Part of the 50S ribosomal subunit. Contacts protein L29, and trigger factor when it is bound to the ribosome.

Its function is as follows. One of the early assembly proteins it binds 23S rRNA. One of the proteins that surrounds the polypeptide exit tunnel on the outside of the ribosome. Forms the main docking site for trigger factor binding to the ribosome. The protein is Large ribosomal subunit protein uL23 of Bordetella avium (strain 197N).